A 72-amino-acid chain; its full sequence is Translation initiation factor IF-1 1 (72 aa).

The 72-residue stretch at 1–72 (MSKDDVIQMQ…TRARIVFRSK (72 aa)) folds into the S1-like domain.

It belongs to the IF-1 family. In terms of assembly, component of the 30S ribosomal translation pre-initiation complex which assembles on the 30S ribosome in the order IF-2 and IF-3, IF-1 and N-formylmethionyl-tRNA(fMet); mRNA recruitment can occur at any time during PIC assembly.

It is found in the cytoplasm. Its function is as follows. One of the essential components for the initiation of protein synthesis. Stabilizes the binding of IF-2 and IF-3 on the 30S subunit to which N-formylmethionyl-tRNA(fMet) subsequently binds. Helps modulate mRNA selection, yielding the 30S pre-initiation complex (PIC). Upon addition of the 50S ribosomal subunit IF-1, IF-2 and IF-3 are released leaving the mature 70S translation initiation complex. The polypeptide is Translation initiation factor IF-1 1 (Bordetella avium (strain 197N)).